A 148-amino-acid chain; its full sequence is Large ribosomal subunit protein bL9 (148 aa).

As to quaternary structure, part of the 50S ribosomal subunit.

Functionally, binds to the 23S rRNA. Extends more that 50 Angstroms beyond the surface of the 70S ribosome. This chain is Large ribosomal subunit protein bL9 (rplI), found in Thermus thermophilus (strain ATCC 27634 / DSM 579 / HB8).